We begin with the raw amino-acid sequence, 539 residues long: Glucans biosynthesis protein D (539 aa).

Positions Met-1–Ala-29 form a signal peptide, tat-type signal.

This sequence belongs to the OpgD/OpgG family. In terms of processing, predicted to be exported by the Tat system. The position of the signal peptide cleavage has not been experimentally proven.

The protein resides in the periplasm. The protein operates within glycan metabolism; osmoregulated periplasmic glucan (OPG) biosynthesis. Functionally, probably involved in the control of the structural glucose backbone of osmoregulated periplasmic glucans (OPGs). This is Glucans biosynthesis protein D from Pseudomonas savastanoi pv. phaseolicola (strain 1448A / Race 6) (Pseudomonas syringae pv. phaseolicola (strain 1448A / Race 6)).